The primary structure comprises 872 residues: DNA mismatch repair protein MutS (872 aa).

ATP is bound at residue 602–609 (GPNMSGKS).

This sequence belongs to the DNA mismatch repair MutS family.

Its function is as follows. This protein is involved in the repair of mismatches in DNA. It is possible that it carries out the mismatch recognition step. This protein has a weak ATPase activity. This is DNA mismatch repair protein MutS from Staphylococcus aureus (strain bovine RF122 / ET3-1).